A 307-amino-acid chain; its full sequence is Probable inactive peptidyl-prolyl cis-trans isomerase-like 6 (307 aa).

The region spanning 141–304 is the PPIase cyclophilin-type domain; it reads FLDISIDLYP…QNCVITASGQ (164 aa).

Belongs to the cyclophilin-type PPIase family.

In terms of biological role, probable inactive PPIase with no peptidyl-prolyl cis-trans isomerase activity. This is Probable inactive peptidyl-prolyl cis-trans isomerase-like 6 from Bos taurus (Bovine).